Reading from the N-terminus, the 147-residue chain is Sec-independent protein translocase protein TatB (147 aa).

The helical transmembrane segment at 1 to 21 (MFDFGFSELIVIAVVTLIVVG) threads the bilayer. Residues 117 to 147 (APAPMSLAPHGDAASAGREPAAVPGSGPEKA) are disordered.

This sequence belongs to the TatB family. In terms of assembly, the Tat system comprises two distinct complexes: a TatABC complex, containing multiple copies of TatA, TatB and TatC subunits, and a separate TatA complex, containing only TatA subunits. Substrates initially bind to the TatABC complex, which probably triggers association of the separate TatA complex to form the active translocon.

The protein localises to the cell inner membrane. Functionally, part of the twin-arginine translocation (Tat) system that transports large folded proteins containing a characteristic twin-arginine motif in their signal peptide across membranes. Together with TatC, TatB is part of a receptor directly interacting with Tat signal peptides. TatB may form an oligomeric binding site that transiently accommodates folded Tat precursor proteins before their translocation. The chain is Sec-independent protein translocase protein TatB from Aromatoleum aromaticum (strain DSM 19018 / LMG 30748 / EbN1) (Azoarcus sp. (strain EbN1)).